A 429-amino-acid chain; its full sequence is Adenylosuccinate synthetase (429 aa).

Residues 12 to 18 (GDEGKGK) and 40 to 42 (GHT) each bind GTP. The active-site Proton acceptor is D13. Residues D13 and G40 each coordinate Mg(2+). Residues 13–16 (DEGK), 38–41 (NAGH), T128, R142, Q223, T238, and R302 contribute to the IMP site. H41 acts as the Proton donor in catalysis. 298–304 (TVTGRPR) contacts substrate. Residues R304, 330-332 (LLD), and 412-414 (SVG) each bind GTP.

This sequence belongs to the adenylosuccinate synthetase family. In terms of assembly, homodimer. Requires Mg(2+) as cofactor.

It is found in the cytoplasm. The enzyme catalyses IMP + L-aspartate + GTP = N(6)-(1,2-dicarboxyethyl)-AMP + GDP + phosphate + 2 H(+). It participates in purine metabolism; AMP biosynthesis via de novo pathway; AMP from IMP: step 1/2. Functionally, plays an important role in the de novo pathway of purine nucleotide biosynthesis. Catalyzes the first committed step in the biosynthesis of AMP from IMP. The polypeptide is Adenylosuccinate synthetase (Lactobacillus acidophilus (strain ATCC 700396 / NCK56 / N2 / NCFM)).